The sequence spans 244 residues: Flavin-dependent thymidylate synthase (244 aa).

A ThyX domain is found at 7-199; it reads PRVFLIASWG…PNLARLVWED (193 aa). Residues Ser-60 and 83–85 each bind FAD; that span reads RHR. DUMP is bound by residues 80-83, 93-95, and Arg-137; these read QFIR and SQR. The short motif at 83–93 is the ThyX motif element; it reads RHRMASYWSES. Residues 153–155 and Asn-160 each bind FAD; that span reads NAR. Residue Arg-165 participates in dUMP binding. Residue Arg-165 is the Involved in ionization of N3 of dUMP, leading to its activation of the active site.

Belongs to the thymidylate synthase ThyX family. As to quaternary structure, homotetramer. Requires FAD as cofactor.

The catalysed reaction is dUMP + (6R)-5,10-methylene-5,6,7,8-tetrahydrofolate + NADPH + H(+) = dTMP + (6S)-5,6,7,8-tetrahydrofolate + NADP(+). Its pathway is pyrimidine metabolism; dTTP biosynthesis. Functionally, catalyzes the reductive methylation of 2'-deoxyuridine-5'-monophosphate (dUMP) to 2'-deoxythymidine-5'-monophosphate (dTMP) while utilizing 5,10-methylenetetrahydrofolate (mTHF) as the methyl donor, and NADPH and FADH(2) as the reductant. The protein is Flavin-dependent thymidylate synthase of Pyrobaculum aerophilum (strain ATCC 51768 / DSM 7523 / JCM 9630 / CIP 104966 / NBRC 100827 / IM2).